The primary structure comprises 468 residues: MSSGKIAQVVGPVVDVVFASGDKLPEINNALIVYKNGDKSQKVVLEVALELGDGLVRTIAMESTDGLTRGLEVLDTGRAISVPVGKDTLGRVFNVLGDAIDLEEPFAEDAERQPIHKKAPSFDELSTSSEILETGIKVIDLLAPYLKGGKVGLFGGAGVGKTVLIQELIHNIAQEHGGISVFTGVGERTREGNDLYWEMKESGVIEKTAMVFGQMNEPPGARMRVALTGLTIAEYFRDVEGQDVLLFIDNIFRFTQAGSEVSALLGRMPSAVGYQPTLATEMGQLQERITSTKKGSVTSIQAIYVPADDYTDPAPATAFAHLDSTTNLERKLTQMGIYPAVDPLASSSRALTPEIVGDEHYEVATEVQRVLQRYRELQDIIAILGMDELSDEEKTLVGRARRIQFFLSQNFNVAETFTGQPGSYVPVEETVRGFKEILDGKHDQIPEDAFRMVGGIEDVIAKAEKMNY.

155-162 lines the ATP pocket; sequence GGAGVGKT.

Belongs to the ATPase alpha/beta chains family. F-type ATPases have 2 components, CF(1) - the catalytic core - and CF(0) - the membrane proton channel. CF(1) has five subunits: alpha(3), beta(3), gamma(1), delta(1), epsilon(1). CF(0) has three main subunits: a(1), b(2) and c(9-12). The alpha and beta chains form an alternating ring which encloses part of the gamma chain. CF(1) is attached to CF(0) by a central stalk formed by the gamma and epsilon chains, while a peripheral stalk is formed by the delta and b chains.

Its subcellular location is the cell membrane. It carries out the reaction ATP + H2O + 4 H(+)(in) = ADP + phosphate + 5 H(+)(out). Functionally, produces ATP from ADP in the presence of a proton gradient across the membrane. The catalytic sites are hosted primarily by the beta subunits. The chain is ATP synthase subunit beta from Streptococcus agalactiae serotype Ia (strain ATCC 27591 / A909 / CDC SS700).